Reading from the N-terminus, the 252-residue chain is Triosephosphate isomerase (252 aa).

Residue 10 to 12 (NWK) participates in substrate binding. Residue histidine 96 is the Electrophile of the active site. Glutamate 168 serves as the catalytic Proton acceptor. Substrate-binding positions include glycine 174, serine 214, and 235 to 236 (GG).

This sequence belongs to the triosephosphate isomerase family. Homodimer.

It is found in the cytoplasm. The catalysed reaction is D-glyceraldehyde 3-phosphate = dihydroxyacetone phosphate. It participates in carbohydrate biosynthesis; gluconeogenesis. The protein operates within carbohydrate degradation; glycolysis; D-glyceraldehyde 3-phosphate from glycerone phosphate: step 1/1. Involved in the gluconeogenesis. Catalyzes stereospecifically the conversion of dihydroxyacetone phosphate (DHAP) to D-glyceraldehyde-3-phosphate (G3P). In Streptococcus equi subsp. zooepidemicus (strain MGCS10565), this protein is Triosephosphate isomerase.